Here is a 162-residue protein sequence, read N- to C-terminus: Small ribosomal subunit protein uS9 (162 aa).

It belongs to the universal ribosomal protein uS9 family.

This Methylobacterium nodulans (strain LMG 21967 / CNCM I-2342 / ORS 2060) protein is Small ribosomal subunit protein uS9.